Reading from the N-terminus, the 786-residue chain is Protein RDM16 (786 aa).

Basic and acidic residues-rich tracts occupy residues 1-80 (MDKE…SRDR), 87-112 (RSHE…GARD), and 123-143 (NGER…KDAQ). 4 disordered regions span residues 1–223 (MDKE…SANL), 255–283 (KKAT…STGT), 532–557 (RPIE…EQKK), and 616–642 (EREQ…KERK). A compositionally biased stretch (polar residues) spans 145–164 (SEGSGATNPTSGVTMGASTY). Residues 165 to 176 (SSIPSEASAAPS) are compositionally biased toward low complexity. A compositionally biased stretch (polar residues) spans 177–189 (QTLLTKVSSISTT). Residues 190–203 (DENKASVVRSHEVP) show a composition bias toward basic and acidic residues. Over residues 268–283 (TRVPPSTTTPAVSTGT) the composition is skewed to low complexity. Pro residues predominate over residues 534-547 (IEPPAEAAPPPPQP).

It is found in the nucleus. It localises to the nucleoplasm. Functions in the RNA-directed DNA methylation (RdDM) pathway. Acts as a pre-mRNA splicing factor, likely by affecting Pol V transcripts. Affects DNA methylation of transposable elements (TEs) and preferentially influences NRPD1- and ROS1-targeted loci. The chain is Protein RDM16 from Arabidopsis thaliana (Mouse-ear cress).